An 893-amino-acid chain; its full sequence is Alanine--tRNA ligase (893 aa).

His574, His578, Cys678, and His682 together coordinate Zn(2+).

It belongs to the class-II aminoacyl-tRNA synthetase family. It depends on Zn(2+) as a cofactor.

The protein localises to the cytoplasm. It catalyses the reaction tRNA(Ala) + L-alanine + ATP = L-alanyl-tRNA(Ala) + AMP + diphosphate. In terms of biological role, catalyzes the attachment of alanine to tRNA(Ala) in a two-step reaction: alanine is first activated by ATP to form Ala-AMP and then transferred to the acceptor end of tRNA(Ala). Also edits incorrectly charged Ser-tRNA(Ala) and Gly-tRNA(Ala) via its editing domain. This Bifidobacterium longum (strain NCC 2705) protein is Alanine--tRNA ligase.